A 147-amino-acid chain; its full sequence is 3-dehydroquinate dehydratase (147 aa).

Residue Y23 is the Proton acceptor of the active site. Substrate is bound by residues N74, H80, and D87. The active-site Proton donor is H100. Residues 101–102 and R111 each bind substrate; that span reads IS.

This sequence belongs to the type-II 3-dehydroquinase family. Homododecamer.

It carries out the reaction 3-dehydroquinate = 3-dehydroshikimate + H2O. The protein operates within metabolic intermediate biosynthesis; chorismate biosynthesis; chorismate from D-erythrose 4-phosphate and phosphoenolpyruvate: step 3/7. In terms of biological role, catalyzes a trans-dehydration via an enolate intermediate. The chain is 3-dehydroquinate dehydratase from Prochlorococcus marinus (strain MIT 9301).